A 150-amino-acid chain; its full sequence is Sulfur-rich protein, serovars L1/L3 (150 aa).

A disordered region spans residues 1-20 (MSTVPVVQGAGSSNSAQDIS). Helical transmembrane passes span 43–63 (VGLV…VSAA) and 69–89 (IYLA…ILSM).

The protein resides in the membrane. This Chlamydia trachomatis protein is Sulfur-rich protein, serovars L1/L3 (srp).